The chain runs to 779 residues: MNNKILEQLEFNKVKELLLPYLKTEQSQEELLELEPMTEASKIEKSFNEISDMEQIFVEHHSFGIVSLSSISESLKRLELSADLNIQELLAIKKVLQSSSDMIHFYSDLDNVSFQSLDRLFENLEQFPNLQGSFQAINDGGFLEHFASPELERIRRQLTNSERRVRQILQDMLKEKAELLSENLIASRSGRSVLPVKNTYRNRISGVVHDISSSGSTVYIEPRAVVTLNEEITQLRADERHEEGRILHAFSDLLRPHVATIRNNAWILGHLDFVRAKYLFMSDNKATIPKISNDSTLALINVRHPLLSNPVANDLHFDHDLTAIVITGPNTGGKTIMLKTLGLAQLMGQSGLPVLADKGSKIAVFNNIFADIGDEQSIEQSLSTFSSHMTHIVSILNEADHNSLVLFDELGAGTDPQEGASLAMAILEHLRLSHIKTMATTHYPELKAYGIETNFVENASMEFDAETLSPTYRFMQGVPGRSNAFEIASRLGLAPFIVKQAKQMTDSDSDVNRIIEQLEAQTLETRRRLDHIKEVEQENLKFNRAVKKLYNEFSHERDKELEKIYQEAQEIVDMALNESDTILKKLNDKSQLKPHEIIDAKAQIKKLAPQVDLSKNKVLNKAKKIKAARAPRIGDDIIVTSYGQRGTLTSQLKDGRWEAQVGIIKMTLTHDEFTLVRVQEEQKVKNKQINVVKKADSSGPRARLDLRGKRYEEAMQELDHFIDQALLNNMGQVDIIHGIGTGVIREGVTKYLRRHKHVKHFAYAPQNAGGSGATIVTLG.

ATP is bound at residue 328-335 (GPNTGGKT). One can recognise a Smr domain in the interval 704-779 (LDLRGKRYEE…GSGATIVTLG (76 aa)).

This sequence belongs to the DNA mismatch repair MutS family. MutS2 subfamily. As to quaternary structure, homodimer. Binds to stalled ribosomes, contacting rRNA.

Its function is as follows. Endonuclease that is involved in the suppression of homologous recombination and thus may have a key role in the control of bacterial genetic diversity. In terms of biological role, acts as a ribosome collision sensor, splitting the ribosome into its 2 subunits. Detects stalled/collided 70S ribosomes which it binds and splits by an ATP-hydrolysis driven conformational change. Acts upstream of the ribosome quality control system (RQC), a ribosome-associated complex that mediates the extraction of incompletely synthesized nascent chains from stalled ribosomes and their subsequent degradation. Probably generates substrates for RQC. This Streptococcus pyogenes serotype M5 (strain Manfredo) protein is Endonuclease MutS2.